The chain runs to 275 residues: ATP synthase subunit delta (275 aa).

The protein belongs to the ATPase delta chain family. As to quaternary structure, F-type ATPases have 2 components, F(1) - the catalytic core - and F(0) - the membrane proton channel. F(1) has five subunits: alpha(3), beta(3), gamma(1), delta(1), epsilon(1). F(0) has three main subunits: a(1), b(2) and c(10-14). The alpha and beta chains form an alternating ring which encloses part of the gamma chain. F(1) is attached to F(0) by a central stalk formed by the gamma and epsilon chains, while a peripheral stalk is formed by the delta and b chains.

It is found in the cell membrane. Functionally, f(1)F(0) ATP synthase produces ATP from ADP in the presence of a proton or sodium gradient. F-type ATPases consist of two structural domains, F(1) containing the extramembraneous catalytic core and F(0) containing the membrane proton channel, linked together by a central stalk and a peripheral stalk. During catalysis, ATP synthesis in the catalytic domain of F(1) is coupled via a rotary mechanism of the central stalk subunits to proton translocation. In terms of biological role, this protein is part of the stalk that links CF(0) to CF(1). It either transmits conformational changes from CF(0) to CF(1) or is implicated in proton conduction. In Pseudarthrobacter chlorophenolicus (strain ATCC 700700 / DSM 12829 / CIP 107037 / JCM 12360 / KCTC 9906 / NCIMB 13794 / A6) (Arthrobacter chlorophenolicus), this protein is ATP synthase subunit delta.